A 428-amino-acid polypeptide reads, in one-letter code: Light-independent protochlorophyllide reductase subunit N (428 aa).

Cys-30, Cys-55, and Cys-116 together coordinate [4Fe-4S] cluster.

It belongs to the BchN/ChlN family. In terms of assembly, protochlorophyllide reductase is composed of three subunits; BchL, BchN and BchB. Forms a heterotetramer of two BchB and two BchN subunits. [4Fe-4S] cluster serves as cofactor.

The catalysed reaction is chlorophyllide a + oxidized 2[4Fe-4S]-[ferredoxin] + 2 ADP + 2 phosphate = protochlorophyllide a + reduced 2[4Fe-4S]-[ferredoxin] + 2 ATP + 2 H2O. Its pathway is porphyrin-containing compound metabolism; bacteriochlorophyll biosynthesis (light-independent). In terms of biological role, component of the dark-operative protochlorophyllide reductase (DPOR) that uses Mg-ATP and reduced ferredoxin to reduce ring D of protochlorophyllide (Pchlide) to form chlorophyllide a (Chlide). This reaction is light-independent. The NB-protein (BchN-BchB) is the catalytic component of the complex. The chain is Light-independent protochlorophyllide reductase subunit N from Bradyrhizobium sp. (strain BTAi1 / ATCC BAA-1182).